A 161-amino-acid chain; its full sequence is Nucleotide-binding protein BTH_I0730 (161 aa).

This sequence belongs to the YajQ family.

In terms of biological role, nucleotide-binding protein. The protein is Nucleotide-binding protein BTH_I0730 of Burkholderia thailandensis (strain ATCC 700388 / DSM 13276 / CCUG 48851 / CIP 106301 / E264).